The primary structure comprises 165 residues: Bark lectin isoform 2 (165 aa).

N-linked (GlcNAc...) asparagine glycans are attached at residues Asn-27 and Asn-57. 2 disulfide bridges follow: Cys-33–Cys-80 and Cys-126–Cys-133.

The protein belongs to the protease inhibitor I3 (leguminous Kunitz-type inhibitor) family. In terms of assembly, dimer.

In terms of biological role, glucose and N-acetylglucosamine binding lectin. Has hemagglutinating activity against human and rabbit erythrocytes which does not require divalent cations. Inhibits factor Xa and, to a lesser extent, trypsin. Does not inhibit neutrophil elastase, human plasma kallikrein, papain, human plasmin, porcine pancreatic kallikrein and bovin chymotrypsin. Has insecticidal activity against the termite species N.corniger. Induces apoptosis in prostrate cancer cell lines DU145 and PC3. This chain is Bark lectin isoform 2, found in Crateva tapia (Garlic-pear tree).